The primary structure comprises 391 residues: MRDPFDWLDPALDALHRAHWYRQPLLSGTPAAVVSVGEPPRPLINFCSNDYLGLANHPQVKAAAIAAIQQWGTGATGSRLLSGQRHLHAQLERAIAQWKGTEAALVFSSGTAANLGTIAALVDQRDLVLGDAYNHACLKKGARLSHATFYEYPHNNVAALAQLLETHRSQYRRCLILTDGVFSMDGDVAPLAKILALAEAYTAMVLVDDAHGTGVLGTNGAGTLAALGQSSPTIIQMGTLSKALGSLGGYIAGCQALITYLQHRASTWIYSTGLSPADAAAALAALEQLQTDPSLRQALGDRIQQLEKGLQALGCPVLPRPLPTPIFCLPAPDPATVLQWGQELQEAGCWVAAVRPPTVPFSRLRITLRADHTPGHIEQLLAALAALLKCC.

Substrate is bound by residues R22 and H135. Residues S183, 208 to 211, and 239 to 242 each bind pyridoxal 5'-phosphate; these read DDAH and TLSK. Position 242 is an N6-(pyridoxal phosphate)lysine (K242). T358 contacts substrate.

This sequence belongs to the class-II pyridoxal-phosphate-dependent aminotransferase family. BioF subfamily. As to quaternary structure, homodimer. Requires pyridoxal 5'-phosphate as cofactor.

It carries out the reaction 6-carboxyhexanoyl-[ACP] + L-alanine + H(+) = (8S)-8-amino-7-oxononanoate + holo-[ACP] + CO2. It participates in cofactor biosynthesis; biotin biosynthesis. In terms of biological role, catalyzes the decarboxylative condensation of pimeloyl-[acyl-carrier protein] and L-alanine to produce 8-amino-7-oxononanoate (AON), [acyl-carrier protein], and carbon dioxide. This is Putative 8-amino-7-oxononanoate synthase (bioF) from Thermosynechococcus vestitus (strain NIES-2133 / IAM M-273 / BP-1).